The primary structure comprises 96 residues: Transcription and mRNA export factor SUS1 (96 aa).

Residue K68 forms a Glycyl lysine isopeptide (Lys-Gly) (interchain with G-Cter in ubiquitin) linkage.

It belongs to the ENY2 family. Component of the nuclear pore complex (NPC)-associated TREX-2 complex (transcription and export complex 2), composed of at least SUS1, SAC3, THP1, SEM1, and CDC31. TREX-2 contains 2 SUS1 chains. The TREX-2 complex interacts with the nucleoporin NUP1. Component of the 1.8 MDa SAGA transcription coactivator-HAT complex. SAGA is built of 5 distinct domains with specialized functions. Within the SAGA complex, SUS1, SGF11, SGF73 and UBP8 form an additional subcomplex of SAGA called the DUB module (deubiquitination module). Interacts directly with THP1, SAC3, SGF11, and with the RNA polymerase II.

The protein resides in the nucleus. The protein localises to the nucleoplasm. It is found in the cytoplasm. Its subcellular location is the P-body. Its function is as follows. Involved in mRNA export coupled transcription activation by association with both the TREX-2 and the SAGA complexes. At the promoters, SAGA is required for recruitment of the basal transcription machinery. It influences RNA polymerase II transcriptional activity through different activities such as TBP interaction and promoter selectivity, interaction with transcription activators, and chromatin modification through histone acetylation and deubiquitination. Within the SAGA complex, participates in a subcomplex required for deubiquitination of H2B and for the maintenance of steady-state H3 methylation levels. The TREX-2 complex functions in docking export-competent ribonucleoprotein particles (mRNPs) to the nuclear entrance of the nuclear pore complex (nuclear basket). TREX-2 participates in mRNA export and accurate chromatin positioning in the nucleus by tethering genes to the nuclear periphery. May also be involved in cytoplasmic mRNA decay by interaction with components of P-bodies. This Saccharomyces cerevisiae (strain RM11-1a) (Baker's yeast) protein is Transcription and mRNA export factor SUS1.